Here is a 256-residue protein sequence, read N- to C-terminus: Small ribosomal subunit protein eS1 (256 aa).

A compositionally biased stretch (basic residues) spans 1–18; that stretch reads MAVGKNKRLSKGKKGLKK. Positions 1–22 are disordered; the sequence is MAVGKNKRLSKGKKGLKKKTQD. An N-acetylalanine; partial modification is found at alanine 2.

The protein belongs to the eukaryotic ribosomal protein eS1 family. Component of the small ribosomal subunit. Mature ribosomes consist of a small (40S) and a large (60S) subunit. The 40S subunit contains about 33 different proteins and 1 molecule of RNA (18S). The 60S subunit contains about 49 different proteins and 3 molecules of RNA (25S, 5.8S and 5S).

It localises to the cytoplasm. The chain is Small ribosomal subunit protein eS1 from Pyricularia oryzae (strain Y34) (Rice blast fungus).